Reading from the N-terminus, the 252-residue chain is Small ribosomal subunit protein eS1 (252 aa).

It belongs to the eukaryotic ribosomal protein eS1 family. As to quaternary structure, component of the small ribosomal subunit. Mature ribosomes consist of a small (40S) and a large (60S) subunit. The 40S subunit contains about 33 different proteins and 1 molecule of RNA (18S). The 60S subunit contains about 49 different proteins and 3 molecules of RNA (25S, 5.8S and 5S).

It is found in the cytoplasm. This is Small ribosomal subunit protein eS1 from Enterocytozoon bieneusi (strain H348) (Microsporidian parasite).